The chain runs to 104 residues: Protein translation factor SUI1 homolog (104 aa).

This sequence belongs to the SUI1 family.

This Ignicoccus hospitalis (strain KIN4/I / DSM 18386 / JCM 14125) protein is Protein translation factor SUI1 homolog.